Reading from the N-terminus, the 396-residue chain is Elongation factor Tu (396 aa).

The tr-type G domain occupies 11-205; the sequence is KPHVNIGTIG…VIDDYIPTPK (195 aa). A G1 region spans residues 20–27; sequence GHVDHGKT. 20-27 contributes to the GTP binding site; that stretch reads GHVDHGKT. Residue T27 participates in Mg(2+) binding. The segment at 61-65 is G2; it reads GITIN. The segment at 82 to 85 is G3; sequence DAPG. GTP-binding positions include 82 to 86 and 137 to 140; these read DAPGH and NKTD. Residues 137–140 are G4; that stretch reads NKTD. Positions 175–177 are G5; it reads SAL.

The protein belongs to the TRAFAC class translation factor GTPase superfamily. Classic translation factor GTPase family. EF-Tu/EF-1A subfamily. As to quaternary structure, monomer.

It is found in the cytoplasm. The enzyme catalyses GTP + H2O = GDP + phosphate + H(+). In terms of biological role, GTP hydrolase that promotes the GTP-dependent binding of aminoacyl-tRNA to the A-site of ribosomes during protein biosynthesis. The chain is Elongation factor Tu from Limosilactobacillus reuteri (strain DSM 20016) (Lactobacillus reuteri).